The chain runs to 434 residues: Probable G-protein coupled receptor 150 (434 aa).

Residues 1 to 3 (MED) are Extracellular-facing. The helical transmembrane segment at 4–24 (LFSPSILPPAPNISVPILLGW) threads the bilayer. At 25-43 (GLNLTLGQGAPASGPPSRR) the chain is on the cytoplasmic side. A helical membrane pass occupies residues 44–64 (VRLVFLGVILVVAVAGNTTVL). At 65–81 (CRLCGGGGPWAGPKRRK) the chain is on the extracellular side. A helical membrane pass occupies residues 82-102 (MDFLLVQLALADLYACGGTAL). At 103–162 (SQLAWELLGEPRAATGDLACRFLQLLQASGRGASAHLVVLIALERRRAVRLPHGRPLPAR) the chain is on the cytoplasmic side. The chain crosses the membrane as a helical span at residues 163-183 (ALAALGWLLALLLALPPAFVV). Residues 184 to 237 (RGDSPSPLPPPPPPTSLQPGAPPAARAWPGERRCHGIFAPLPRWHLQVYAFYEA) are Extracellular-facing. The tract at residues 188 to 210 (PSPLPPPPPPTSLQPGAPPAARA) is disordered. Residues 189 to 205 (SPLPPPPPPTSLQPGAP) are compositionally biased toward pro residues. Residues 238 to 258 (VAGFVAPVTVLGVACGHLLSV) form a helical membrane-spanning segment. At 259–293 (WWRHRPQAPAAAAPWSASPGRAPAPSALPRAKVQS) the chain is on the cytoplasmic side. Residues 294–314 (LKMSLLLALLFVGCELPYFAA) traverse the membrane as a helical segment. At 315 to 334 (RLAAAWSSGPAGDWEGEGLS) the chain is on the extracellular side. A helical membrane pass occupies residues 335–355 (AALRVVAMANSALNPFVYLFF). Topologically, residues 356-434 (QAGDCRLRRQ…PLPCSCESAF (79 aa)) are cytoplasmic. Basic residues predominate over residues 398–407 (WPHPHYHHAR). The disordered stretch occupies residues 398 to 434 (WPHPHYHHARREPLDEGGLRPPPPRPRPLPCSCESAF). The span at 417-426 (RPPPPRPRPL) shows a compositional bias: pro residues.

It belongs to the G-protein coupled receptor 1 family.

Its subcellular location is the cell membrane. Functionally, orphan receptor. The sequence is that of Probable G-protein coupled receptor 150 (GPR150) from Homo sapiens (Human).